The sequence spans 605 residues: Glucose-6-phosphate isomerase (605 aa).

The Proton donor role is filled by glutamate 410. Residues histidine 441 and lysine 569 contribute to the active site.

The protein belongs to the GPI family.

The protein resides in the cytoplasm. It catalyses the reaction alpha-D-glucose 6-phosphate = beta-D-fructose 6-phosphate. It participates in carbohydrate degradation; glycolysis; D-glyceraldehyde 3-phosphate and glycerone phosphate from D-glucose: step 2/4. The chain is Glucose-6-phosphate isomerase (PGI) from Leishmania mexicana.